Consider the following 248-residue polypeptide: Tyrosine recombinase XerD-like (248 aa).

One can recognise a Core-binding (CB) domain in the interval 1-72; sequence MIAFIEPFLA…TVNQFLYYLY (72 aa). Residues 92–248 form the Tyr recombinase domain; sequence SLKPQLTRLD…PITLEKYYKM (157 aa). Residue arginine 213 is part of the active site. The O-(3'-phospho-DNA)-tyrosine intermediate role is filled by tyrosine 245.

Belongs to the 'phage' integrase family. XerD-like subfamily.

The protein resides in the cytoplasm. In terms of biological role, putative tyrosine recombinase. Not involved in the cutting and rejoining of the recombining DNA molecules on dif(SL) site. The sequence is that of Tyrosine recombinase XerD-like from Streptococcus equi subsp. zooepidemicus (strain H70).